The chain runs to 139 residues: Small ribosomal subunit protein uS12 (139 aa).

2 disordered regions span residues 1-22 (MPTINQLVRKGRKSHKGKSKSP) and 37-57 (KTPSPQKRGVATRVGTMTPKK). The segment covering 9–19 (RKGRKSHKGKS) has biased composition (basic residues). A 3-methylthioaspartic acid modification is found at Asp102.

The protein belongs to the universal ribosomal protein uS12 family. In terms of assembly, part of the 30S ribosomal subunit. Contacts proteins S8 and S17. May interact with IF1 in the 30S initiation complex.

In terms of biological role, with S4 and S5 plays an important role in translational accuracy. Functionally, interacts with and stabilizes bases of the 16S rRNA that are involved in tRNA selection in the A site and with the mRNA backbone. Located at the interface of the 30S and 50S subunits, it traverses the body of the 30S subunit contacting proteins on the other side and probably holding the rRNA structure together. The combined cluster of proteins S8, S12 and S17 appears to hold together the shoulder and platform of the 30S subunit. This is Small ribosomal subunit protein uS12 from Limosilactobacillus reuteri (strain DSM 20016) (Lactobacillus reuteri).